A 316-amino-acid chain; its full sequence is L-lactate dehydrogenase 3 (316 aa).

Residues Val16, Asp37, Arg42, and Tyr68 each coordinate NAD(+). Arg91 serves as a coordination point for substrate. Residues Ser104, 121–123, and Thr146 contribute to the NAD(+) site; that span reads ASN. 123–126 contributes to the substrate binding site; that stretch reads NPVD. 151–154 serves as a coordination point for substrate; the sequence is DSSR. Residues Arg156 and His171 each contribute to the beta-D-fructose 1,6-bisphosphate site. Residue His178 is the Proton acceptor of the active site. Position 233 (Thr233) interacts with substrate.

It belongs to the LDH/MDH superfamily. LDH family. In terms of assembly, homotetramer.

The protein localises to the cytoplasm. It catalyses the reaction (S)-lactate + NAD(+) = pyruvate + NADH + H(+). It functions in the pathway fermentation; pyruvate fermentation to lactate; (S)-lactate from pyruvate: step 1/1. Allosterically activated by fructose 1,6-bisphosphate (FBP). Its function is as follows. Catalyzes the conversion of lactate to pyruvate. The polypeptide is L-lactate dehydrogenase 3 (Bacillus anthracis).